A 627-amino-acid polypeptide reads, in one-letter code: Protein CER1-like 1 (627 aa).

Helical transmembrane passes span 19–39 (FKYL…VTAV), 48–68 (LMIV…ISVS), 126–146 (GAIL…YWFH), 186–206 (LLFA…IVSI), and 328–348 (YLTC…TSAI). Residues 138 to 272 (VEFLYYWFHR…MPIYDFIYGT (135 aa)) form the Fatty acid hydroxylase domain.

The protein belongs to the sterol desaturase family. Expressed in flowers and siliques. Not detected in pollen, pedicels and seeds.

It localises to the membrane. This is Protein CER1-like 1 from Arabidopsis thaliana (Mouse-ear cress).